A 426-amino-acid chain; its full sequence is MLIRFKGAHIVDPGNINEQKDLLVKDGLVHALLDPGAADPEPGIDTVDVTGMLLVPGLIDLHVHLREPGHEYKETIQTGLMAAAKGGFTAVCPMPNTSPVNDNAQVTRFILDRAKAAGLSRVYPVGAITLGLKGETLAEYGEMKQAGMVAITDDGRPVENARVMRRAMEYATGLGLPVMSHSEDLSLARDGAMNEGSFATRIGIKGIPNAAESIMVMREIAIAELTHARVHIAHVSCEESVDAIRHGKQRGVQVTCETAPHYFTLTDKAVGDYDTHAKMNPPLRSEADRLAVIKGLQDGTIDCIATDHAPHSPLEKAVEFDQAAFGIIGLETSLVLSLKLVQDELLSMETLVEKMSRNPARFLGLDNRLIPGNPADITVIDPDRVHVIDPETFVSKSRNTPFAGIEVKGEVLLTMVEGRIIYQREI.

Zn(2+) is bound by residues H62 and H64. Substrate contacts are provided by residues 64–66 (HLR) and N96. 3 residues coordinate Zn(2+): D154, H181, and H234. Position 280 (N280) interacts with substrate. D307 contributes to the Zn(2+) binding site. The active site involves D307. Residues H311 and 325 to 326 (FG) contribute to the substrate site.

This sequence belongs to the metallo-dependent hydrolases superfamily. DHOase family. Class I DHOase subfamily. The cofactor is Zn(2+).

The catalysed reaction is (S)-dihydroorotate + H2O = N-carbamoyl-L-aspartate + H(+). It participates in pyrimidine metabolism; UMP biosynthesis via de novo pathway; (S)-dihydroorotate from bicarbonate: step 3/3. In terms of biological role, catalyzes the reversible cyclization of carbamoyl aspartate to dihydroorotate. This is Dihydroorotase from Desulforapulum autotrophicum (strain ATCC 43914 / DSM 3382 / VKM B-1955 / HRM2) (Desulfobacterium autotrophicum).